Consider the following 199-residue polypeptide: NAD(P)H dehydrogenase (quinone) (199 aa).

Residues 4 to 190 (VLVLYHSMYG…AIARFQGKHV (187 aa)) enclose the Flavodoxin-like domain. Residues 10–15 (SMYGHI) and 79–81 (TRF) each bind FMN. Tyr-12 is an NAD(+) binding site. Trp-99 is a substrate binding site. His-134 serves as a coordination point for FMN.

Belongs to the WrbA family. It depends on FMN as a cofactor.

The catalysed reaction is a quinone + NADH + H(+) = a quinol + NAD(+). It catalyses the reaction a quinone + NADPH + H(+) = a quinol + NADP(+). This chain is NAD(P)H dehydrogenase (quinone), found in Tolumonas auensis (strain DSM 9187 / NBRC 110442 / TA 4).